The primary structure comprises 410 residues: Testis-specific Y-encoded-like protein 6 (410 aa).

2 disordered regions span residues 1-31 and 46-69; these read MSLP…EKSK and PIVF…DGGH. At S9 the chain carries Phosphoserine. The segment covering 18–31 has biased composition (basic and acidic residues); the sequence is EDPHQGQRSREKSK.

It belongs to the nucleosome assembly protein (NAP) family.

This Homo sapiens (Human) protein is Testis-specific Y-encoded-like protein 6 (TSPYL6).